We begin with the raw amino-acid sequence, 181 residues long: Caltractin ICL1a (181 aa).

Residues 1 to 29 form a disordered region; sequence MARRGQQPPPQQAPPAQKNQPGKFNPAEF. The span at 14 to 23 shows a compositional bias: low complexity; the sequence is PPAQKNQPGK. 4 consecutive EF-hand domains span residues 37-72, 73-108, 110-145, and 146-181; these read EEVL…LGFE, AKNQ…RISE, DSKA…LGET, and MDDS…KTFA. The Ca(2+) site is built by D50, D52, T54, S56, E61, D86, D88, S90, Q92, and E97.

It belongs to the centrin family. In terms of assembly, monomer.

The protein resides in the cytoplasm. It is found in the cytoskeleton. Its function is as follows. Plays a fundamental role in microtubule organizing center structure and function. Component of the infraciliary lattice (ICL) and the ciliary basal bodies. The polypeptide is Caltractin ICL1a (Icl1a) (Paramecium tetraurelia).